The chain runs to 720 residues: Calpain-12 (720 aa).

The region spanning 45-341 (LFRDPCFPAG…FNTVQICSLS (297 aa)) is the Calpain catalytic domain. Residues cysteine 105, histidine 259, and asparagine 283 contribute to the active site. The tract at residues 342-541 (PEVLGPSPAG…DDVISADLDA (200 aa)) is domain III. Over residues 393-403 (DEEEDDDDEEG) the composition is skewed to acidic residues. The tract at residues 393–415 (DEEEDDDDEEGPWGGWGAAGARG) is disordered. The domain IV stretch occupies residues 542–720 (LQAPYKPLEL…KQWSEVATFS (179 aa)). The 36-residue stretch at 621–656 (GHLMSWQATFDKFDEDASGTMNSCELRLALTAAGFH) folds into the EF-hand domain. Ca(2+)-binding residues include aspartate 634, aspartate 636, serine 638, threonine 640, and glutamate 645.

It belongs to the peptidase C2 family. Expression localized to the cortex of the hair follicle during the anagen phase of hair cycle.

In terms of biological role, calcium-regulated non-lysosomal thiol-protease. In Mus musculus (Mouse), this protein is Calpain-12 (Capn12).